A 510-amino-acid chain; its full sequence is Metalloprotease TIKI homolog (510 aa).

A signal peptide spans 1 to 30; the sequence is MQVKIVQVFPCLVLLVKLVLLSVLLPSATG. Residues 31–489 are Extracellular-facing; that stretch reads SYHCSNNATQ…FIPSASSGLR (459 aa). N-linked (GlcNAc...) asparagine glycans are attached at residues asparagine 37, asparagine 98, asparagine 108, asparagine 141, asparagine 223, asparagine 281, asparagine 322, asparagine 383, and asparagine 417. Over residues 435 to 471 the composition is skewed to low complexity; it reads TSLNSATASTTVATPTSSVTPPTSSSSQTRSLTISDS. The disordered stretch occupies residues 435–477; sequence TSLNSATASTTVATPTSSVTPPTSSSSQTRSLTISDSQRTSDD. A helical transmembrane segment spans residues 490 to 510; it reads YNIGLVCVTLFFVLLIITSAL.

It belongs to the TIKI family. Requires Mn(2+) as cofactor. Co(2+) is required as a cofactor.

It is found in the membrane. Functionally, metalloprotease. This is Metalloprotease TIKI homolog from Amphimedon queenslandica (Sponge).